A 166-amino-acid chain; its full sequence is Putative tRNA (cytidine(34)-2'-O)-methyltransferase (166 aa).

The S-adenosyl-L-methionine site is built by Leu83, Gly109, Ile130, and Ser138.

Belongs to the class IV-like SAM-binding methyltransferase superfamily. RNA methyltransferase TrmH family. TrmL subfamily.

The protein localises to the cytoplasm. It catalyses the reaction cytidine(34) in tRNA + S-adenosyl-L-methionine = 2'-O-methylcytidine(34) in tRNA + S-adenosyl-L-homocysteine + H(+). It carries out the reaction 5-carboxymethylaminomethyluridine(34) in tRNA(Leu) + S-adenosyl-L-methionine = 5-carboxymethylaminomethyl-2'-O-methyluridine(34) in tRNA(Leu) + S-adenosyl-L-homocysteine + H(+). Functionally, could methylate the ribose at the nucleotide 34 wobble position in tRNA. The protein is Putative tRNA (cytidine(34)-2'-O)-methyltransferase of Mycoplasma pneumoniae (strain ATCC 29342 / M129 / Subtype 1) (Mycoplasmoides pneumoniae).